A 421-amino-acid chain; its full sequence is Serine hydroxymethyltransferase (421 aa).

Residues L121 and 125-127 each bind (6S)-5,6,7,8-tetrahydrofolate; that span reads GHL. K229 carries the N6-(pyridoxal phosphate)lysine modification.

Belongs to the SHMT family. As to quaternary structure, homodimer. The cofactor is pyridoxal 5'-phosphate.

The protein resides in the cytoplasm. It carries out the reaction (6R)-5,10-methylene-5,6,7,8-tetrahydrofolate + glycine + H2O = (6S)-5,6,7,8-tetrahydrofolate + L-serine. It functions in the pathway one-carbon metabolism; tetrahydrofolate interconversion. The protein operates within amino-acid biosynthesis; glycine biosynthesis; glycine from L-serine: step 1/1. Its function is as follows. Catalyzes the reversible interconversion of serine and glycine with tetrahydrofolate (THF) serving as the one-carbon carrier. This reaction serves as the major source of one-carbon groups required for the biosynthesis of purines, thymidylate, methionine, and other important biomolecules. Also exhibits THF-independent aldolase activity toward beta-hydroxyamino acids, producing glycine and aldehydes, via a retro-aldol mechanism. The protein is Serine hydroxymethyltransferase of Haemophilus influenzae (strain 86-028NP).